The sequence spans 121 residues: Large ribosomal subunit protein uL14 (121 aa).

Belongs to the universal ribosomal protein uL14 family. Part of the 50S ribosomal subunit. Forms a cluster with proteins L3 and L19. In the 70S ribosome, L14 and L19 interact and together make contacts with the 16S rRNA in bridges B5 and B8.

Its function is as follows. Binds to 23S rRNA. Forms part of two intersubunit bridges in the 70S ribosome. In Legionella pneumophila (strain Corby), this protein is Large ribosomal subunit protein uL14.